A 526-amino-acid polypeptide reads, in one-letter code: Probable feruloyl esterase B-2 (526 aa).

Residues 1-18 (MTKLSLLPLLALASAVLA) form the signal peptide. 2 disulfide bridges follow: C27/C74 and C62/C113. 3 N-linked (GlcNAc...) asparagine glycosylation sites follow: N52, N97, and N137. 4 disulfides stabilise this stretch: C186–C441, C255–C272, C281–C291, and C503–C525. S187 serves as the catalytic Acyl-ester intermediate. N233 carries N-linked (GlcNAc...) asparagine glycosylation. Residues D256, D259, A261, D263, and I265 each contribute to the Ca(2+) site. A glycan (N-linked (GlcNAc...) asparagine) is linked at N311. Catalysis depends on charge relay system residues D400 and H440. A glycan (N-linked (GlcNAc...) asparagine) is linked at N516.

The protein belongs to the tannase family.

The protein localises to the secreted. It carries out the reaction feruloyl-polysaccharide + H2O = ferulate + polysaccharide.. Functionally, involved in degradation of plant cell walls. Hydrolyzes the feruloyl-arabinose ester bond in arabinoxylans as well as the feruloyl-galactose and feruloyl-arabinose ester bonds in pectin. In Neosartorya fischeri (strain ATCC 1020 / DSM 3700 / CBS 544.65 / FGSC A1164 / JCM 1740 / NRRL 181 / WB 181) (Aspergillus fischerianus), this protein is Probable feruloyl esterase B-2 (faeB-2).